A 325-amino-acid chain; its full sequence is Lipoyl synthase (325 aa).

Residues Cys-71, Cys-76, Cys-82, Cys-97, Cys-101, Cys-104, and Ser-311 each coordinate [4Fe-4S] cluster. The 218-residue stretch at 83–300 folds into the Radical SAM core domain; it reads FSGGTATFMI…ERQALAMGFT (218 aa).

Belongs to the radical SAM superfamily. Lipoyl synthase family. It depends on [4Fe-4S] cluster as a cofactor.

Its subcellular location is the cytoplasm. It catalyses the reaction [[Fe-S] cluster scaffold protein carrying a second [4Fe-4S](2+) cluster] + N(6)-octanoyl-L-lysyl-[protein] + 2 oxidized [2Fe-2S]-[ferredoxin] + 2 S-adenosyl-L-methionine + 4 H(+) = [[Fe-S] cluster scaffold protein] + N(6)-[(R)-dihydrolipoyl]-L-lysyl-[protein] + 4 Fe(3+) + 2 hydrogen sulfide + 2 5'-deoxyadenosine + 2 L-methionine + 2 reduced [2Fe-2S]-[ferredoxin]. The protein operates within protein modification; protein lipoylation via endogenous pathway; protein N(6)-(lipoyl)lysine from octanoyl-[acyl-carrier-protein]: step 2/2. Catalyzes the radical-mediated insertion of two sulfur atoms into the C-6 and C-8 positions of the octanoyl moiety bound to the lipoyl domains of lipoate-dependent enzymes, thereby converting the octanoylated domains into lipoylated derivatives. The protein is Lipoyl synthase of Methylobacillus flagellatus (strain ATCC 51484 / DSM 6875 / VKM B-1610 / KT).